The following is a 299-amino-acid chain: Nucleotide-binding protein Moth_0258 (299 aa).

Position 14–21 (14–21 (GLSGAGKT)) interacts with ATP. Residue 68 to 71 (DIRG) participates in GTP binding.

Belongs to the RapZ-like family.

Its function is as follows. Displays ATPase and GTPase activities. In Moorella thermoacetica (strain ATCC 39073 / JCM 9320), this protein is Nucleotide-binding protein Moth_0258.